Consider the following 429-residue polypeptide: Enolase (429 aa).

Glutamine 163 serves as a coordination point for (2R)-2-phosphoglycerate. The active-site Proton donor is glutamate 205. Residues aspartate 242, glutamate 287, and aspartate 314 each contribute to the Mg(2+) site. (2R)-2-phosphoglycerate-binding residues include lysine 339, arginine 368, serine 369, and lysine 390. The Proton acceptor role is filled by lysine 339.

Belongs to the enolase family. In terms of assembly, homooctamer. Mg(2+) is required as a cofactor.

The protein localises to the cytoplasm. Its subcellular location is the secreted. It is found in the cell surface. It carries out the reaction (2R)-2-phosphoglycerate = phosphoenolpyruvate + H2O. The protein operates within carbohydrate degradation; glycolysis; pyruvate from D-glyceraldehyde 3-phosphate: step 4/5. Catalyzes the reversible conversion of 2-phosphoglycerate (2-PG) into phosphoenolpyruvate (PEP). It is essential for the degradation of carbohydrates via glycolysis. This chain is Enolase, found in Zymomonas mobilis subsp. mobilis (strain ATCC 31821 / ZM4 / CP4).